The chain runs to 389 residues: MFRPSGSGYRQKWTGLTLKGALYGSWILGVFPFAYDSWTRTLRRSKWLIAYGFVLNAAFILLVVTNDTESETPLRMEVFHRNALAEQINGIHDIQSLSMVSIMLLRSFWKSGDIERTLNELEDLQHRYFRNYSLEECISFDRFVLYKGFSVVLELVSMLVLELGMSPNYSAQFFIGLGSLCLMLLAVLLGASHFHLAVVFVYRYVWIVNRELLKLVNKMAIGETVESERMDLLLYLYHRLLDLGQRLASIYDYQMVMVMVSFLIANVLGIYFFIIYSISLNKSLDFKILVFVQALVINMLDFWLNVEICELAERTGRQTSTILKLFNDIENIDEKLERSITDFALFCSHRRLRFHHCGLFYVNYEMGFRMAITSFLYLLFLIQFDYWNL.

Residues 1-14 (MFRPSGSGYRQKWT) lie on the Cytoplasmic side of the membrane. A helical membrane pass occupies residues 15 to 35 (GLTLKGALYGSWILGVFPFAY). The Extracellular portion of the chain corresponds to 36–46 (DSWTRTLRRSK). A helical membrane pass occupies residues 47-67 (WLIAYGFVLNAAFILLVVTND). The Cytoplasmic portion of the chain corresponds to 68 to 142 (TESETPLRME…SLEECISFDR (75 aa)). A helical membrane pass occupies residues 143–163 (FVLYKGFSVVLELVSMLVLEL). At 164–170 (GMSPNYS) the chain is on the extracellular side. An N-linked (GlcNAc...) asparagine glycan is attached at asparagine 168. The chain crosses the membrane as a helical span at residues 171–191 (AQFFIGLGSLCLMLLAVLLGA). Residues 192–254 (SHFHLAVVFV…QRLASIYDYQ (63 aa)) are Cytoplasmic-facing. Residues 255 to 275 (MVMVMVSFLIANVLGIYFFII) form a helical membrane-spanning segment. Residues 276-287 (YSISLNKSLDFK) lie on the Extracellular side of the membrane. Asparagine 281 carries N-linked (GlcNAc...) asparagine glycosylation. A helical membrane pass occupies residues 288-308 (ILVFVQALVINMLDFWLNVEI). The Cytoplasmic segment spans residues 309–366 (CELAERTGRQTSTILKLFNDIENIDEKLERSITDFALFCSHRRLRFHHCGLFYVNYEM). Residues 367 to 387 (GFRMAITSFLYLLFLIQFDYW) form a helical membrane-spanning segment. Residues 388–389 (NL) lie on the Extracellular side of the membrane.

It belongs to the insect chemoreceptor superfamily. Gustatory receptor (GR) family. Gr22e subfamily. Taste bristles on the labial palp, labral and cibarial sense organs, chemosensory bristles on the leg and anterior wing margin. In larvae, is expressed in neurons of the terminal external chemosensory organ and in the dorsal pharyngeal sense organ. Neurons expressing Gr22e also express Gr66a and correspond to taste neurons that mediate sensitivity to bitter compounds.

It is found in the cell membrane. In terms of biological role, gustatory receptor which mediates acceptance or avoidance behavior, depending on its substrates. Seems to be involved in the sensing of bitter taste since it is expressed in neurons that mediate sensitivity to bitter compounds which are also avoidance-type taste neurons. This chain is Gustatory receptor for bitter taste 22e (Gr22e), found in Drosophila melanogaster (Fruit fly).